We begin with the raw amino-acid sequence, 322 residues long: UDP-N-acetylenolpyruvoylglucosamine reductase (322 aa).

The 167-residue stretch at 36-202 (RAGGPAQVLF…TSVLFEGVPG (167 aa)) folds into the FAD-binding PCMH-type domain. Residue R182 is part of the active site. S231 acts as the Proton donor in catalysis. The active site involves E301.

The protein belongs to the MurB family. Requires FAD as cofactor.

It localises to the cytoplasm. It catalyses the reaction UDP-N-acetyl-alpha-D-muramate + NADP(+) = UDP-N-acetyl-3-O-(1-carboxyvinyl)-alpha-D-glucosamine + NADPH + H(+). The protein operates within cell wall biogenesis; peptidoglycan biosynthesis. Functionally, cell wall formation. This chain is UDP-N-acetylenolpyruvoylglucosamine reductase, found in Brucella melitensis biotype 2 (strain ATCC 23457).